The sequence spans 402 residues: Protochlorophyllide reductase B, chloroplastic (402 aa).

This sequence belongs to the short-chain dehydrogenases/reductases (SDR) family. POR subfamily.

It is found in the plastid. The protein resides in the chloroplast. It carries out the reaction chlorophyllide a + NADP(+) = protochlorophyllide a + NADPH + H(+). It participates in porphyrin-containing compound metabolism; chlorophyll biosynthesis. Functionally, phototransformation of protochlorophyllide (Pchlide) to chlorophyllide (Chlide). This is Protochlorophyllide reductase B, chloroplastic (PORB) from Oryza sativa subsp. japonica (Rice).